Here is a 94-residue protein sequence, read N- to C-terminus: Integration host factor subunit beta (94 aa).

This sequence belongs to the bacterial histone-like protein family. Heterodimer of an alpha and a beta chain.

This protein is one of the two subunits of integration host factor, a specific DNA-binding protein that functions in genetic recombination as well as in transcriptional and translational control. The chain is Integration host factor subunit beta from Azoarcus sp. (strain BH72).